A 1007-amino-acid polypeptide reads, in one-letter code: Zinc finger CCCH domain-containing protein 4 (1007 aa).

A Helicase ATP-binding domain is found at 28–192 (VEKVKGNRVT…FRDLGRGERV (165 aa)). 41-48 (GDTGCGKS) provides a ligand contact to ATP. The DEAH box motif lies at 139–142 (DEIH). Positions 250–420 (LIHRLLLHIH…EQVLMICCAE (171 aa)) constitute a Helicase C-terminal domain. C3H1-type zinc fingers lie at residues 723–750 (ALEN…HSSR) and 751–778 (APRP…HDSG).

In Oryza sativa subsp. japonica (Rice), this protein is Zinc finger CCCH domain-containing protein 4.